The sequence spans 129 residues: Lysozyme C-3 (129 aa).

A C-type lysozyme domain is found at 1-129; sequence KVYERCELAA…VSRWIRGCRL (129 aa). 4 cysteine pairs are disulfide-bonded: Cys-6–Cys-127, Cys-30–Cys-115, Cys-64–Cys-80, and Cys-76–Cys-94. Catalysis depends on residues Glu-35 and Asp-52.

It belongs to the glycosyl hydrolase 22 family.

The protein resides in the secreted. The catalysed reaction is Hydrolysis of (1-&gt;4)-beta-linkages between N-acetylmuramic acid and N-acetyl-D-glucosamine residues in a peptidoglycan and between N-acetyl-D-glucosamine residues in chitodextrins.. Functionally, lysozymes have primarily a bacteriolytic function; those in tissues and body fluids are associated with the monocyte-macrophage system and enhance the activity of immunoagents. The sequence is that of Lysozyme C-3 from Anas platyrhynchos (Mallard).